Consider the following 496-residue polypeptide: Solute carrier family 2, facilitated glucose transporter member 11 (496 aa).

Residues 1 to 11 (MRALRRLIQGR) are Cytoplasmic-facing. A helical membrane pass occupies residues 12-32 (ILLLTICAAGIGGTFQFGYNL). Residues 33 to 61 (SIINAPTLHIQEFTNETWQARTGEPLPDH) are Extracellular-facing. Residue asparagine 47 is glycosylated (N-linked (GlcNAc...) asparagine). The chain crosses the membrane as a helical span at residues 62–82 (LVLLMWSLIVSLYPLGGLFGA). The Cytoplasmic portion of the chain corresponds to 83–97 (LLAGPLAITLGRKKS). The chain crosses the membrane as a helical span at residues 98 to 118 (LLVNNIFVVSAAILFGFSRKA). Residues 119–128 (GSFEMIMLGR) lie on the Extracellular side of the membrane. The helical transmembrane segment at 129-149 (LLVGVNAGVSMNIQPMYLGES) threads the bilayer. At 150-157 (APKELRGA) the chain is on the cytoplasmic side. A helical membrane pass occupies residues 158–178 (VAMSSAIFTALGIVMGQVVGL). Over 179–187 (RELLGGPQA) the chain is Extracellular. A helical transmembrane segment spans residues 188-208 (WPLLLASCLVPGALQLASLPL). Over 209–273 (LPESPRYLLI…LFQHRALRRQ (65 aa)) the chain is Cytoplasmic. A helical transmembrane segment spans residues 274–294 (VTSLVVLGSAMELCGNDSVYA). At 295 to 311 (YASSVFRKAGVPEAKIQ) the chain is on the extracellular side. A helical transmembrane segment spans residues 312–332 (YAIIGTGSCELLTAVVSCVVI). The Cytoplasmic portion of the chain corresponds to 333-338 (ERVGRR). Residues 339–359 (VLLIGGYSLMTCWGSIFTVAL) form a helical membrane-spanning segment. Over 360–364 (CLQSS) the chain is Extracellular. A helical transmembrane segment spans residues 365-385 (FPWTLYLAMACIFAFILSFGI). At 386 to 408 (GPAGVTGILATELFDQMARPAAC) the chain is on the cytoplasmic side. The chain crosses the membrane as a helical span at residues 409–429 (MVCGALMWIMLILVGLGFPFI). The Extracellular segment spans residues 430–435 (MEALSH). A helical membrane pass occupies residues 436-456 (FLYVPFLGVCVCGAIYTGLFL). The Cytoplasmic segment spans residues 457 to 496 (PETKGKTFQEISKELHRLNFPRRAQGPTWRSLEVIQSTEL).

Belongs to the major facilitator superfamily. Sugar transporter (TC 2.A.1.1) family. Glucose transporter subfamily. Expressed in heart and skeletal muscle.

Its subcellular location is the cell membrane. It catalyses the reaction D-glucose(out) = D-glucose(in). Functionally, facilitative glucose transporter. This is Solute carrier family 2, facilitated glucose transporter member 11 from Homo sapiens (Human).